A 552-amino-acid chain; its full sequence is Nucleoside-diphosphatase mig-23 (552 aa).

At 1-6 the chain is on the cytoplasmic side; that stretch reads MRVSLR. The helical transmembrane segment at 7-27 threads the bilayer; sequence FTILAVSAMIFFPVIVFIYVV. At 28-489 the chain is on the lumenal side; the sequence is EAHTSPKVIA…IVKETHSSSE (462 aa). Catalysis depends on Glu174, which acts as the Proton acceptor. N-linked (GlcNAc...) asparagine glycosylation is found at Asn190 and Asn284. A helical membrane pass occupies residues 490–510; sequence SLWAPLFFLSAVFCLFVLVCA. The Cytoplasmic segment spans residues 511-552; sequence KEQSVLCFDDKRRSSFGMSRSQYSYKMLKENRTSSSFLENFA.

It belongs to the GDA1/CD39 NTPase family. Expressed in body wall muscles.

Its subcellular location is the golgi apparatus membrane. The catalysed reaction is a ribonucleoside 5'-diphosphate + H2O = a ribonucleoside 5'-phosphate + phosphate + H(+). Seems to be able to hydrolyze ADP, UDP and GDP. Supports mig-17 glycosylation and surface expression, which is required for proper migration of distal tip cells during gonad morphogenesis. The sequence is that of Nucleoside-diphosphatase mig-23 (mig-23) from Caenorhabditis elegans.